Here is a 412-residue protein sequence, read N- to C-terminus: Phosphoglycerate kinase 1 (412 aa).

Residues 28–30, 65–68, R122, and R162 each bind substrate; these read DFN and HQGR. Residues E336 and 361–364 each bind ATP; that span reads GGHT.

It belongs to the phosphoglycerate kinase family. Monomer.

The protein localises to the cytoplasm. It carries out the reaction (2R)-3-phosphoglycerate + ATP = (2R)-3-phospho-glyceroyl phosphate + ADP. It functions in the pathway carbohydrate degradation; glycolysis; pyruvate from D-glyceraldehyde 3-phosphate: step 2/5. This is Phosphoglycerate kinase 1 from Methanosarcina acetivorans (strain ATCC 35395 / DSM 2834 / JCM 12185 / C2A).